The primary structure comprises 245 residues: 1-(5-phosphoribosyl)-5-[(5-phosphoribosylamino)methylideneamino] imidazole-4-carboxamide isomerase (245 aa).

Residue aspartate 8 is the Proton acceptor of the active site. Catalysis depends on aspartate 130, which acts as the Proton donor.

The protein belongs to the HisA/HisF family.

It is found in the cytoplasm. It carries out the reaction 1-(5-phospho-beta-D-ribosyl)-5-[(5-phospho-beta-D-ribosylamino)methylideneamino]imidazole-4-carboxamide = 5-[(5-phospho-1-deoxy-D-ribulos-1-ylimino)methylamino]-1-(5-phospho-beta-D-ribosyl)imidazole-4-carboxamide. It functions in the pathway amino-acid biosynthesis; L-histidine biosynthesis; L-histidine from 5-phospho-alpha-D-ribose 1-diphosphate: step 4/9. The polypeptide is 1-(5-phosphoribosyl)-5-[(5-phosphoribosylamino)methylideneamino] imidazole-4-carboxamide isomerase (Pseudomonas fluorescens (strain Pf0-1)).